The chain runs to 353 residues: Protein RecA (353 aa).

75–82 (GPESSGKT) contributes to the ATP binding site.

Belongs to the RecA family.

It is found in the cytoplasm. Its function is as follows. Can catalyze the hydrolysis of ATP in the presence of single-stranded DNA, the ATP-dependent uptake of single-stranded DNA by duplex DNA, and the ATP-dependent hybridization of homologous single-stranded DNAs. It interacts with LexA causing its activation and leading to its autocatalytic cleavage. The protein is Protein RecA of Cupriavidus necator (Alcaligenes eutrophus).